Reading from the N-terminus, the 865-residue chain is AdoMet-dependent rRNA methyltransferase SPB1 (865 aa).

S-adenosyl-L-methionine contacts are provided by G56, W58, D76, D92, and D117. K157 functions as the Proton acceptor in the catalytic mechanism. 2 coiled-coil regions span residues 358–400 (ESMD…VRMQ) and 462–492 (GETDDESDEELDRLETELDDMYDQFRERKAA). Disordered stretches follow at residues 370-396 (LEKLKERNSTKKKRERRKENERKQKDI) and 443-676 (VVAS…TKDG). Basic and acidic residues predominate over residues 386-396 (RKENERKQKDI). Acidic residues predominate over residues 463 to 483 (ETDDESDEELDRLETELDDMY). Positions 484–497 (DQFRERKAASDAKY) are enriched in basic and acidic residues. Residues 526-545 (ISDDSELEEESSGDSDDEDD) show a composition bias toward acidic residues. Residues 556–566 (LDTTPSDNSGL) show a composition bias toward polar residues. Over residues 600–609 (GEDEDADMED) the composition is skewed to acidic residues. Basic and acidic residues-rich tracts occupy residues 610–627 (TVSKADSKKTKEKTADKK) and 659–676 (KSGKEDDWEDEDKRTKDG). The stretch at 762–789 (REAKGRKKMKAAQRLEKLKKKSDLLVNE) forms a coiled coil.

It belongs to the class I-like SAM-binding methyltransferase superfamily. RNA methyltransferase RlmE family. SPB1 subfamily. In terms of assembly, component of the nucleolar and nucleoplasmic pre-60S ribosomal particle.

Its subcellular location is the nucleus. It localises to the nucleolus. The catalysed reaction is a ribonucleotide in rRNA + S-adenosyl-L-methionine = a 2'-O-methylribonucleotide in rRNA + S-adenosyl-L-homocysteine + H(+). Its function is as follows. Required for proper assembly of pre-ribosomal particles during the biogenesis of the 60S ribosomal subunit. In Pyricularia oryzae (strain 70-15 / ATCC MYA-4617 / FGSC 8958) (Rice blast fungus), this protein is AdoMet-dependent rRNA methyltransferase SPB1.